We begin with the raw amino-acid sequence, 83 residues long: Protein L83L (83 aa).

It belongs to the asfivirus L83L family. As to quaternary structure, interacts with host IL1B.

The protein resides in the host cytoplasm. Functionally, may subvert the host innate immune response by interacting with host IL1B and interfering with its function. The protein is Protein L83L of Ornithodoros (relapsing fever ticks).